A 245-amino-acid chain; its full sequence is Probable transcriptional regulatory protein TP_0474 (245 aa).

It belongs to the TACO1 family.

Its subcellular location is the cytoplasm. In Treponema pallidum (strain Nichols), this protein is Probable transcriptional regulatory protein TP_0474.